A 465-amino-acid polypeptide reads, in one-letter code: MAAPTNTLLIEGTFSELAEELAHYVDTIRKTQTEGSVHAEIAPALDKLREQEQSEEEPKPAQQQQILKERDEVLKKLVVASAALNAAPEKEITAAYNLVIHLVRQSSNPGMFLPRICAFLAKPFPSSPQHGPSIALSILSTIFNTLAPSDNSRYHVFLAILAVIRTTSSVMAFEALKTQLKNQLSSWIATWNLDEEDVEKLHLAVADAAKKAGDEEMSYNHVILALQAIPPSEASSNEARELAVRALISALTYPFVFDFTPLTSSDAIQNLRSAEPSLFELLEIFASDTLDAYEEFIKSTPLSSMHNLAESAEILQNKMRVLTLASLAASTPSRSLPYDSISNALRIPREDVEKWVIDTIRAGLVEGKLSQLKGEFLVHRATYRVFGERQWAEVQGRLMVWRRSLENVLGVIHSEKEKFVREGIAAANAAAESGREGGARGGAGERRRGGGGHQGPREVDLVGGD.

Residues 215-383 form the PCI domain; the sequence is EEMSYNHVIL…GEFLVHRATY (169 aa). The tract at residues 429-465 is disordered; it reads AAAESGREGGARGGAGERRRGGGGHQGPREVDLVGGD. Composition is skewed to basic and acidic residues over residues 433-448 and 455-465; these read SGREGGARGGAGERRR and GPREVDLVGGD.

It belongs to the eIF-3 subunit M family. In terms of assembly, component of the eukaryotic translation initiation factor 3 (eIF-3) complex.

It localises to the cytoplasm. In terms of biological role, component of the eukaryotic translation initiation factor 3 (eIF-3) complex, which is involved in protein synthesis of a specialized repertoire of mRNAs and, together with other initiation factors, stimulates binding of mRNA and methionyl-tRNAi to the 40S ribosome. The eIF-3 complex specifically targets and initiates translation of a subset of mRNAs involved in cell proliferation. In Coccidioides immitis (strain RS) (Valley fever fungus), this protein is Eukaryotic translation initiation factor 3 subunit M.